The following is a 329-amino-acid chain: Ketol-acid reductoisomerase (NADP(+)) (329 aa).

A KARI N-terminal Rossmann domain is found at 2 to 181 (VQKYYESDAD…GATRAVVFET (180 aa)). NADP(+) contacts are provided by residues 25 to 28 (YGSQ), Arg48, Ser52, and 82 to 85 (DENQ). His107 is a catalytic residue. Gly133 provides a ligand contact to NADP(+). Positions 182–327 (TFAEETETDL…AEIRGFMPQF (146 aa)) constitute a KARI C-terminal knotted domain. 4 residues coordinate Mg(2+): Asp190, Glu194, Glu226, and Glu230. Ser251 contributes to the substrate binding site.

The protein belongs to the ketol-acid reductoisomerase family. Mg(2+) is required as a cofactor.

It catalyses the reaction (2R)-2,3-dihydroxy-3-methylbutanoate + NADP(+) = (2S)-2-acetolactate + NADPH + H(+). The enzyme catalyses (2R,3R)-2,3-dihydroxy-3-methylpentanoate + NADP(+) = (S)-2-ethyl-2-hydroxy-3-oxobutanoate + NADPH + H(+). It functions in the pathway amino-acid biosynthesis; L-isoleucine biosynthesis; L-isoleucine from 2-oxobutanoate: step 2/4. The protein operates within amino-acid biosynthesis; L-valine biosynthesis; L-valine from pyruvate: step 2/4. Its function is as follows. Involved in the biosynthesis of branched-chain amino acids (BCAA). Catalyzes an alkyl-migration followed by a ketol-acid reduction of (S)-2-acetolactate (S2AL) to yield (R)-2,3-dihydroxy-isovalerate. In the isomerase reaction, S2AL is rearranged via a Mg-dependent methyl migration to produce 3-hydroxy-3-methyl-2-ketobutyrate (HMKB). In the reductase reaction, this 2-ketoacid undergoes a metal-dependent reduction by NADPH to yield (R)-2,3-dihydroxy-isovalerate. This chain is Ketol-acid reductoisomerase (NADP(+)), found in Methanoculleus marisnigri (strain ATCC 35101 / DSM 1498 / JR1).